The primary structure comprises 159 residues: D-aminoacyl-tRNA deacylase (159 aa).

The Gly-cisPro motif, important for rejection of L-amino acids signature appears at 146 to 147; that stretch reads GP.

The protein belongs to the DTD family. Homodimer.

The protein resides in the cytoplasm. The enzyme catalyses glycyl-tRNA(Ala) + H2O = tRNA(Ala) + glycine + H(+). It catalyses the reaction a D-aminoacyl-tRNA + H2O = a tRNA + a D-alpha-amino acid + H(+). Functionally, an aminoacyl-tRNA editing enzyme that deacylates mischarged D-aminoacyl-tRNAs. Also deacylates mischarged glycyl-tRNA(Ala), protecting cells against glycine mischarging by AlaRS. Acts via tRNA-based rather than protein-based catalysis; rejects L-amino acids rather than detecting D-amino acids in the active site. By recycling D-aminoacyl-tRNA to D-amino acids and free tRNA molecules, this enzyme counteracts the toxicity associated with the formation of D-aminoacyl-tRNA entities in vivo and helps enforce protein L-homochirality. The sequence is that of D-aminoacyl-tRNA deacylase from Bifidobacterium animalis subsp. lactis (strain AD011).